The sequence spans 282 residues: MSTYLIGDVHGCYDELIALLAQVEFDPRRDTLWLTGDLVARGPGSLEVLRYVKSLGDSVRLVLGNHDLHLLAVFAGISRNKPKDRLKPLLEAPDADELLNWLRRQPLLQVDEEKKLVMAHAGITPQWDLETAQQCARDVEAVLSSDSYPFFLDAMYGDMPNHWSNELSGLARLRFISNAFTRMRYCFPNGQLDMYSKEAPEDAPAPLKPWFAIPGPVSNAYSIAFGHWASLEGRGTPEGIYALDTGCCWGGELTCLRWEDKQYFTQPSNRQKSLDEGEAVAS.

It belongs to the Ap4A hydrolase family.

It carries out the reaction P(1),P(4)-bis(5'-adenosyl) tetraphosphate + H2O = 2 ADP + 2 H(+). Functionally, hydrolyzes diadenosine 5',5'''-P1,P4-tetraphosphate to yield ADP. The sequence is that of Bis(5'-nucleosyl)-tetraphosphatase, symmetrical from Klebsiella pneumoniae subsp. pneumoniae (strain ATCC 700721 / MGH 78578).